We begin with the raw amino-acid sequence, 419 residues long: Phosphatidylinositol 5-phosphate 4-kinase type-2 gamma (419 aa).

One can recognise a PIPK domain in the interval 46-418; that stretch reads ASDPLISVFM…RFLEFVTNIF (373 aa). Residues 299 to 310 show a composition bias toward acidic residues; it reads QEEEEDLEEDHT. The disordered stretch occupies residues 299 to 320; it reads QEEEEDLEEDHTENESSPHMNV.

In terms of processing, phosphorylated, phosphorylation is induced by EGF.

It localises to the endoplasmic reticulum. Its subcellular location is the cytoplasm. It catalyses the reaction a 1,2-diacyl-sn-glycero-3-phospho-(1D-myo-inositol-5-phosphate) + ATP = a 1,2-diacyl-sn-glycero-3-phospho-(1D-myo-inositol-4,5-bisphosphate) + ADP + H(+). It carries out the reaction 1,2-dihexadecanoyl-sn-glycero-3-phospho-(1D-myo-inositol-5-phosphate) + ATP = 1,2-dihexadecanoyl-sn-glycero-3-phospho-(1D-myo-inositol-4,5-bisphosphate) + ADP + H(+). The enzyme catalyses 1,2-dihexadecanoyl-sn-glycero-3-phospho-(1D-myo-inositol-5-phosphate) + GTP = 1,2-dihexadecanoyl-sn-glycero-3-phospho-(1D-myo-inositol-4,5-bisphosphate) + GDP + H(+). Phosphatidylinositol 5-phosphate 4-kinase with low enzymatic activity. May be a GTP sensor, has higher GTP-dependent kinase activity than ATP-dependent kinase activity. This Xenopus tropicalis (Western clawed frog) protein is Phosphatidylinositol 5-phosphate 4-kinase type-2 gamma (pip4k2c).